Consider the following 447-residue polypeptide: UDP-N-acetylglucosamine 1-carboxyvinyltransferase (447 aa).

Phosphoenolpyruvate is bound at residue 27–28 (KN). UDP-N-acetyl-alpha-D-glucosamine is bound at residue arginine 97. The active-site Proton donor is cysteine 121. Cysteine 121 is modified (2-(S-cysteinyl)pyruvic acid O-phosphothioketal). Residues 126–130 (RPVDL), aspartate 314, and valine 336 contribute to the UDP-N-acetyl-alpha-D-glucosamine site.

This sequence belongs to the EPSP synthase family. MurA subfamily.

The protein resides in the cytoplasm. The enzyme catalyses phosphoenolpyruvate + UDP-N-acetyl-alpha-D-glucosamine = UDP-N-acetyl-3-O-(1-carboxyvinyl)-alpha-D-glucosamine + phosphate. The protein operates within cell wall biogenesis; peptidoglycan biosynthesis. In terms of biological role, cell wall formation. Adds enolpyruvyl to UDP-N-acetylglucosamine. In Trichormus variabilis (strain ATCC 29413 / PCC 7937) (Anabaena variabilis), this protein is UDP-N-acetylglucosamine 1-carboxyvinyltransferase.